A 150-amino-acid polypeptide reads, in one-letter code: SsrA-binding protein (150 aa).

This sequence belongs to the SmpB family.

The protein localises to the cytoplasm. Its function is as follows. Required for rescue of stalled ribosomes mediated by trans-translation. Binds to transfer-messenger RNA (tmRNA), required for stable association of tmRNA with ribosomes. tmRNA and SmpB together mimic tRNA shape, replacing the anticodon stem-loop with SmpB. tmRNA is encoded by the ssrA gene; the 2 termini fold to resemble tRNA(Ala) and it encodes a 'tag peptide', a short internal open reading frame. During trans-translation Ala-aminoacylated tmRNA acts like a tRNA, entering the A-site of stalled ribosomes, displacing the stalled mRNA. The ribosome then switches to translate the ORF on the tmRNA; the nascent peptide is terminated with the 'tag peptide' encoded by the tmRNA and targeted for degradation. The ribosome is freed to recommence translation, which seems to be the essential function of trans-translation. This chain is SsrA-binding protein, found in Nitratiruptor sp. (strain SB155-2).